Consider the following 100-residue polypeptide: Probable antitoxin MazE1 (100 aa).

A disordered region spans residues 77-100 (PYESEAERSAARARRNARQQRSAQ).

Forms a complex with cognate toxin MazF1.

Probable antitoxin component of a type II toxin-antitoxin (TA) system. Labile antitoxin that binds to cognate MazF1 toxin and counteracts its endoribonuclease activity. The sequence is that of Probable antitoxin MazE1 (mazE1) from Mycobacterium bovis (strain ATCC BAA-935 / AF2122/97).